Here is a 387-residue protein sequence, read N- to C-terminus: Mannitol-1-phosphate 5-dehydrogenase (387 aa).

Position 3-14 (3-14 (ALHFGAGNIGRG)) interacts with NAD(+).

The protein belongs to the mannitol dehydrogenase family.

The enzyme catalyses D-mannitol 1-phosphate + NAD(+) = beta-D-fructose 6-phosphate + NADH + H(+). This chain is Mannitol-1-phosphate 5-dehydrogenase, found in Yersinia pestis bv. Antiqua (strain Antiqua).